The following is a 372-amino-acid chain: Nucleosome assembly protein 1;1 (372 aa).

The stretch at 26-80 (VNALKNKLQNLAGQRSDVLENLTPNVRKRVDALRDIQSQHDELEAKFREERAILE) forms a coiled coil. Ser41 is modified (phosphoserine). The Nuclear export signal motif lies at 47–62 (LTPNVRKRVDALRDIQ). Positions 223 to 228 (KKKPKK) match the Nuclear localization signal motif. Positions 299 to 372 (AMEAEDFEID…DERPPECKQQ (74 aa)) are disordered. A compositionally biased stretch (acidic residues) spans 300–337 (MEAEDFEIDDDEEDDIDEDEDEEDEEDEEDDDDEDEEE). Residues 360 to 372 (GKQDERPPECKQQ) are compositionally biased toward basic and acidic residues. A Cysteine methyl ester modification is found at Cys369. A lipid anchor (S-farnesyl cysteine) is attached at Cys369. A propeptide spans 370–372 (KQQ) (removed in mature form).

This sequence belongs to the nucleosome assembly protein (NAP) family. Can form homomeric and heteromeric protein complexes with NAP1;2, NAP1;3 and NAP1;4. Binds histone H2A. Interacts with PP438/PNM1. In terms of processing, prenylation of the protein is required for its function during the cell proliferation phase of leaf development. Ubiquitous.

Its subcellular location is the nucleus. The protein localises to the cytoplasm. Functionally, may modulate chromatin structure by regulation of nucleosome assembly/disassembly. Contributes to the regulation of cell proliferation and cell expansion. May function in nucleotide excision repair (NER). Involved in somatic homologous recombination. This is Nucleosome assembly protein 1;1 (NAP1;1) from Arabidopsis thaliana (Mouse-ear cress).